The following is a 340-amino-acid chain: DNA-directed RNA polymerase subunit alpha (340 aa).

An alpha N-terminal domain (alpha-NTD) region spans residues M1–E236. An alpha C-terminal domain (alpha-CTD) region spans residues F251–N340.

Belongs to the RNA polymerase alpha chain family. In terms of assembly, homodimer. The RNAP catalytic core consists of 2 alpha, 1 beta, 1 beta' and 1 omega subunit. When a sigma factor is associated with the core the holoenzyme is formed, which can initiate transcription.

The catalysed reaction is RNA(n) + a ribonucleoside 5'-triphosphate = RNA(n+1) + diphosphate. Its function is as follows. DNA-dependent RNA polymerase catalyzes the transcription of DNA into RNA using the four ribonucleoside triphosphates as substrates. This is DNA-directed RNA polymerase subunit alpha from Rickettsia peacockii (strain Rustic).